We begin with the raw amino-acid sequence, 201 residues long: tRNA (guanine-N(7)-)-methyltransferase (201 aa).

Residues glutamate 34, glutamate 59, aspartate 86, and aspartate 107 each coordinate S-adenosyl-L-methionine. Aspartate 107 is a catalytic residue. Residues lysine 111, aspartate 143, and 181-184 each bind substrate; that span reads TDYE.

The protein belongs to the class I-like SAM-binding methyltransferase superfamily. TrmB family.

The catalysed reaction is guanosine(46) in tRNA + S-adenosyl-L-methionine = N(7)-methylguanosine(46) in tRNA + S-adenosyl-L-homocysteine. It functions in the pathway tRNA modification; N(7)-methylguanine-tRNA biosynthesis. Its function is as follows. Catalyzes the formation of N(7)-methylguanine at position 46 (m7G46) in tRNA. This is tRNA (guanine-N(7)-)-methyltransferase from Mycoplasma mobile (strain ATCC 43663 / 163K / NCTC 11711) (Mesomycoplasma mobile).